A 395-amino-acid chain; its full sequence is Flap endonuclease 1 (395 aa).

The interval 1–104 (MGIKHLFQVI…GELAKRTARK (104 aa)) is N-domain. A Mg(2+)-binding site is contributed by aspartate 34. Arginine 47 and arginine 70 together coordinate DNA. Residues aspartate 86, glutamate 158, glutamate 160, aspartate 179, and aspartate 181 each coordinate Mg(2+). Positions 122–253 (EIEKFSRRTV…NTALKLIREH (132 aa)) are I-domain. Glutamate 158 contacts DNA. DNA-binding residues include glycine 231 and aspartate 233. Aspartate 233 is a binding site for Mg(2+). The interval 341–349 (QQSRLEGFF) is interaction with PCNA. Residues 356–389 (DAEKASLKRKHDEKLQEQKKRKKEEAKAKKEAKA) show a composition bias toward basic and acidic residues. Residues 356-395 (DAEKASLKRKHDEKLQEQKKRKKEEAKAKKEAKAKPRGAA) form a disordered region.

This sequence belongs to the XPG/RAD2 endonuclease family. FEN1 subfamily. Interacts with PCNA. Three molecules of fen1 bind to one PCNA trimer with each molecule binding to one PCNA monomer. PCNA stimulates the nuclease activity without altering cleavage specificity. Requires Mg(2+) as cofactor. Phosphorylated. Phosphorylation upon DNA damage induces relocalization to the nuclear plasma.

The protein resides in the nucleus. The protein localises to the nucleolus. It localises to the nucleoplasm. It is found in the mitochondrion. Structure-specific nuclease with 5'-flap endonuclease and 5'-3' exonuclease activities involved in DNA replication and repair. During DNA replication, cleaves the 5'-overhanging flap structure that is generated by displacement synthesis when DNA polymerase encounters the 5'-end of a downstream Okazaki fragment. It enters the flap from the 5'-end and then tracks to cleave the flap base, leaving a nick for ligation. Also involved in the long patch base excision repair (LP-BER) pathway, by cleaving within the apurinic/apyrimidinic (AP) site-terminated flap. Acts as a genome stabilization factor that prevents flaps from equilibrating into structures that lead to duplications and deletions. Also possesses 5'-3' exonuclease activity on nicked or gapped double-stranded DNA, and exhibits RNase H activity. Also involved in replication and repair of rDNA and in repairing mitochondrial DNA. The chain is Flap endonuclease 1 (fen1) from Aspergillus clavatus (strain ATCC 1007 / CBS 513.65 / DSM 816 / NCTC 3887 / NRRL 1 / QM 1276 / 107).